A 500-amino-acid polypeptide reads, in one-letter code: Glycerol kinase (500 aa).

ADP is bound at residue Thr-15. Residues Thr-15, Thr-16, and Ser-17 each contribute to the ATP site. Sn-glycerol 3-phosphate is bound at residue Thr-15. ADP is bound at residue Arg-19. 4 residues coordinate sn-glycerol 3-phosphate: Arg-85, Glu-86, Tyr-137, and Asp-245. The glycerol site is built by Arg-85, Glu-86, Tyr-137, Asp-245, and Gln-246. The ADP site is built by Thr-267 and Gly-310. Positions 267, 310, 314, and 411 each coordinate ATP. Gly-411 and Asn-415 together coordinate ADP.

Belongs to the FGGY kinase family.

It catalyses the reaction glycerol + ATP = sn-glycerol 3-phosphate + ADP + H(+). Its pathway is polyol metabolism; glycerol degradation via glycerol kinase pathway; sn-glycerol 3-phosphate from glycerol: step 1/1. With respect to regulation, inhibited by fructose 1,6-bisphosphate (FBP). Functionally, key enzyme in the regulation of glycerol uptake and metabolism. Catalyzes the phosphorylation of glycerol to yield sn-glycerol 3-phosphate. The polypeptide is Glycerol kinase (Aeromonas hydrophila subsp. hydrophila (strain ATCC 7966 / DSM 30187 / BCRC 13018 / CCUG 14551 / JCM 1027 / KCTC 2358 / NCIMB 9240 / NCTC 8049)).